The sequence spans 445 residues: ATP-dependent rRNA helicase rrp3 (445 aa).

A compositionally biased stretch (basic and acidic residues) spans 1–10 (MSKNSSRDSS). The interval 1–28 (MSKNSSRDSSPEEVSPDTETPSTTTAPK) is disordered. The segment covering 17 to 28 (DTETPSTTTAPK) has biased composition (low complexity). Positions 28–56 (KTFRELGVIDSLCEACEELGYTAPTPIQE) match the Q motif motif. Residues 59–229 (IPIALEGRDL…RASLSDPVRV (171 aa)) enclose the Helicase ATP-binding domain. 72-79 (AETGSGKT) is an ATP binding site. The DEAD box signature appears at 178-181 (DEAD). The 161-residue stretch at 240–400 (KLLQSYLFIP…EYKPEKDEVM (161 aa)) folds into the Helicase C-terminal domain. Residues 415 to 445 (LTMRDMQDKDNKGRGPRNRKRTRDDLDQDDG) are disordered.

It belongs to the DEAD box helicase family. DDX47/RRP3 subfamily. Interacts with the SSU processome.

The protein localises to the nucleus. The catalysed reaction is ATP + H2O = ADP + phosphate + H(+). ATP-dependent rRNA helicase required for pre-ribosomal RNA processing. Involved in the maturation of the 35S-pre-rRNA and to its cleavage to mature 18S rRNA. In Aspergillus terreus (strain NIH 2624 / FGSC A1156), this protein is ATP-dependent rRNA helicase rrp3.